We begin with the raw amino-acid sequence, 141 residues long: Hemoglobin subunit alpha (141 aa).

In terms of domain architecture, Globin spans 1–141 (VLSPADKTNV…VSTVLTSKYR (141 aa)). A Phosphoserine modification is found at Ser3. Lys7 is subject to N6-succinyllysine. At Thr8 the chain carries Phosphothreonine. Residue Lys11 is modified to N6-succinyllysine. The residue at position 16 (Lys16) is an N6-acetyllysine; alternate. Lys16 is subject to N6-succinyllysine; alternate. Tyr24 carries the post-translational modification Phosphotyrosine. Ser35 is subject to Phosphoserine. Lys40 is subject to N6-succinyllysine. Position 49 is a phosphoserine (Ser49). An O2-binding site is contributed by His58. A heme b-binding site is contributed by His87. Ser102 carries the post-translational modification Phosphoserine. At Thr108 the chain carries Phosphothreonine. Phosphoserine occurs at positions 124 and 131. Thr134 and Thr137 each carry phosphothreonine. A Phosphoserine modification is found at Ser138.

It belongs to the globin family. In terms of assembly, heterotetramer of two alpha chains and two beta chains. As to expression, red blood cells.

Functionally, involved in oxygen transport from the lung to the various peripheral tissues. In terms of biological role, hemopressin acts as an antagonist peptide of the cannabinoid receptor CNR1. Hemopressin-binding efficiently blocks cannabinoid receptor CNR1 and subsequent signaling. This Taphozous georgianus (Sharp-nosed tomb bat) protein is Hemoglobin subunit alpha (HBA).